A 245-amino-acid polypeptide reads, in one-letter code: Mannose/glucose-specific lectin (245 aa).

Positions 87 and 107 each coordinate a carbohydrate. N119 is a glycosylation site (N-linked (GlcNAc...) asparagine). Mn(2+)-binding residues include E129 and D131. Positions 131 and 133 each coordinate Ca(2+). A carbohydrate contacts are provided by S138 and N139. Residues N139 and D142 each coordinate Ca(2+). Positions 142 and 147 each coordinate Mn(2+). Residues G221, E222, and Q223 each coordinate a carbohydrate.

This sequence belongs to the leguminous lectin family. In terms of assembly, homodimer.

Mannose/glucose-specific lectin that also binds derivatives N-acetyl-D-glucosamine and alpha-methyl-D-mannopyranoside with even higher affinity. Has hemagglutinating activity towards rabbit erythrocytes. Is toxic towards brine shrimp A.nauplii. In rats, induces dose-dependent paw edema. The sequence is that of Mannose/glucose-specific lectin from Centrolobium tomentosum (Arariba).